The primary structure comprises 377 residues: MSLSLSDIKFPESWELIPNERNYIDYVYKESVELGVWRPDNKRDLIAHNNVVSLSKFFWPNMDFERLVMGGELMVWFFTFDDALDAGIYNDEQQAQVVKRMSDVFMNGTVEDDASGPEKMALHLRNKCEVMCGERKDTFNRFISSCIQWVDSIIPFNKIKIDGASPDIELYSYLRKINIGAFPCVTLTEVMLDHEIDHYVWYDPRWIKMNEDIAIITTLINDLVSYEKEVNDNAGDLNPLFFIQKQRKVPLTESFKEVVGLINHWVKDFTNLEESFMKSHKFKNSKQKRDFECMLEHLHYLASGSKLWSMQTPRYCSPTSPFIEMRKQSSSPNLTNSISIPTNNTNNSNNITSSPNKKQKIDITSSSAIFTTREIIN.

The short motif at 81–86 is the DDxx(x)D/E motif element; that stretch reads DDALDA. The NDxxSxxxD/E motif signature appears at 221 to 229; it reads NDLVSYEKE. A disordered region spans residues 326–359; that stretch reads RKQSSSPNLTNSISIPTNNTNNSNNITSSPNKKQ. The span at 335 to 356 shows a compositional bias: low complexity; it reads TNSISIPTNNTNNSNNITSSPN.

It belongs to the terpene synthase family.

It catalyses the reaction (2E,6E)-farnesyl diphosphate = (2S,3R,6S,9S)-(-)-protoillud-7-ene + diphosphate. Its function is as follows. Terpene synthase that converts its substrate farnesyl diphosphate (FPP) into the sesquiterpene protoillud-7-ene. The chain is Terpene synthase 1 from Dictyostelium purpureum (Slime mold).